The following is a 571-amino-acid chain: Proline--tRNA ligase (571 aa).

This sequence belongs to the class-II aminoacyl-tRNA synthetase family. ProS type 1 subfamily. As to quaternary structure, homodimer.

Its subcellular location is the cytoplasm. The catalysed reaction is tRNA(Pro) + L-proline + ATP = L-prolyl-tRNA(Pro) + AMP + diphosphate. In terms of biological role, catalyzes the attachment of proline to tRNA(Pro) in a two-step reaction: proline is first activated by ATP to form Pro-AMP and then transferred to the acceptor end of tRNA(Pro). As ProRS can inadvertently accommodate and process non-cognate amino acids such as alanine and cysteine, to avoid such errors it has two additional distinct editing activities against alanine. One activity is designated as 'pretransfer' editing and involves the tRNA(Pro)-independent hydrolysis of activated Ala-AMP. The other activity is designated 'posttransfer' editing and involves deacylation of mischarged Ala-tRNA(Pro). The misacylated Cys-tRNA(Pro) is not edited by ProRS. In Pseudomonas syringae pv. syringae (strain B728a), this protein is Proline--tRNA ligase.